The chain runs to 172 residues: 3-hydroxydecanoyl-[acyl-carrier-protein] dehydratase (172 aa).

His70 is a catalytic residue.

It belongs to the thioester dehydratase family. FabA subfamily. In terms of assembly, homodimer.

It localises to the cytoplasm. It catalyses the reaction a (3R)-hydroxyacyl-[ACP] = a (2E)-enoyl-[ACP] + H2O. It carries out the reaction (3R)-hydroxydecanoyl-[ACP] = (2E)-decenoyl-[ACP] + H2O. The catalysed reaction is (2E)-decenoyl-[ACP] = (3Z)-decenoyl-[ACP]. It participates in lipid metabolism; fatty acid biosynthesis. In terms of biological role, necessary for the introduction of cis unsaturation into fatty acids. Catalyzes the dehydration of (3R)-3-hydroxydecanoyl-ACP to E-(2)-decenoyl-ACP and then its isomerization to Z-(3)-decenoyl-ACP. Can catalyze the dehydratase reaction for beta-hydroxyacyl-ACPs with saturated chain lengths up to 16:0, being most active on intermediate chain length. The sequence is that of 3-hydroxydecanoyl-[acyl-carrier-protein] dehydratase from Xylella fastidiosa (strain M23).